The sequence spans 666 residues: Polyamine deacetylase HDAC10 (666 aa).

Positions 1–323 (MGTALVYHED…VCMMVQTLLG (323 aa)) are histone deacetylase. Residue His135 is part of the active site.

The protein belongs to the histone deacetylase family. HD type 2 subfamily. In terms of assembly, interacts with HDAC3. Interacts with HDAC2 and NCOR2/SMRT. Interacts with HSPA8/HSC70. Interacts with MSH2. As to expression, widely expressed.

The protein localises to the cytoplasm. The protein resides in the nucleus. The enzyme catalyses N(8)-acetylspermidine + H2O = spermidine + acetate. It carries out the reaction N-acetylputrescine + H2O = putrescine + acetate. It catalyses the reaction N-acetylcadaverine + H2O = cadaverine + acetate. The catalysed reaction is N(6)-acetyl-L-lysyl-[protein] + H2O = L-lysyl-[protein] + acetate. Its function is as follows. Polyamine deacetylase (PDAC), which acts preferentially on N(8)-acetylspermidine, and also on acetylcadaverine and acetylputrescine. Exhibits attenuated catalytic activity toward N(1),N(8)-diacetylspermidine and very low activity, if any, toward N(1)-acetylspermidine. Histone deacetylase activity has been observed in vitro. Has also been shown to be involved in MSH2 deacetylation. The physiological relevance of protein/histone deacetylase activity is unclear and could be very weak. May play a role in the promotion of late stages of autophagy, possibly autophagosome-lysosome fusion and/or lysosomal exocytosis in neuroblastoma cells. May play a role in homologous recombination. May promote DNA mismatch repair. The polypeptide is Polyamine deacetylase HDAC10 (Hdac10) (Mus musculus (Mouse)).